Reading from the N-terminus, the 139-residue chain is MPSTPSKTLETFPNPKPGRDFHIHMEVPEFTCLCPKTGQPDFATLVLDYIPNQACVELKSLKLYMWSFRDEGHFHEDVTNRILDDLVAATDPRYMRLTAKFYVRGGIFTNVVAEHRKDGWQPAPRVDLTQFEHQSNTRG.

The Thioimide intermediate role is filled by Cys34. The active-site Proton donor is Asp41. Residues 56–58 (VEL) and 75–76 (HE) each bind substrate.

The protein belongs to the GTP cyclohydrolase I family. QueF type 1 subfamily.

The protein resides in the cytoplasm. The catalysed reaction is 7-aminomethyl-7-carbaguanine + 2 NADP(+) = 7-cyano-7-deazaguanine + 2 NADPH + 3 H(+). It participates in tRNA modification; tRNA-queuosine biosynthesis. In terms of biological role, catalyzes the NADPH-dependent reduction of 7-cyano-7-deazaguanine (preQ0) to 7-aminomethyl-7-deazaguanine (preQ1). The chain is NADPH-dependent 7-cyano-7-deazaguanine reductase from Thiobacillus denitrificans (strain ATCC 25259 / T1).